We begin with the raw amino-acid sequence, 1226 residues long: Integrin alpha pat-2 (1226 aa).

An N-terminal signal peptide occupies residues 1-25 (MREGSFPRRIGLLLGLLGLLAGVAT). The Extracellular segment spans residues 26–1154 (FNIDTKNVVV…IASEEGRDLP (1129 aa)). 7 FG-GAP repeats span residues 27–94 (NIDT…TCRE), 108–171 (NGSH…NAEE), 178–233 (EPAR…TDRP), 234–290 (NTEY…MMIN), 291–345 (LTDE…KPQY), 362–421 (GKQI…GVRE), and 425–488 (QKIE…PESA). N-linked (GlcNAc...) asparagine glycans are attached at residues Asn108, Asn228, and Asn290. N-linked (GlcNAc...) asparagine glycosylation is present at Asn608. Positions 620–622 (RGD) match the Cell attachment site motif. N-linked (GlcNAc...) asparagine glycosylation is present at Asn679. A disordered region spans residues 709–733 (SVGGDGSKSAPACSPTSDEPDSDGK). 2 N-linked (GlcNAc...) asparagine glycosylation sites follow: Asn775 and Asn819. Disordered regions lie at residues 898–958 (LRIT…HVYE) and 982–1040 (DYEY…ARFS). Residues 920–931 (REEDDESYEDET) are compositionally biased toward acidic residues. A compositionally biased stretch (low complexity) spans 932–951 (TTQSQSTRHQSTQHQTHHQS). Acidic residues predominate over residues 985-1005 (YIPDDQEYDGDDFEEEDDEDF). Basic residues predominate over residues 1010-1026 (SKRVKRNPTPKKKKKGG). Positions 1027–1040 (EHRGEPRSDKARFS) are enriched in basic and acidic residues. Residues 1155–1177 (WWLYLLAILIGLAILILLILLLW) traverse the membrane as a helical segment. The Cytoplasmic portion of the chain corresponds to 1178-1226 (RCGFFKRNRPPTEHAELRADRQPNAQYADSQSRYTSQDQYNQGRHGQML). Residues 1191 to 1226 (HAELRADRQPNAQYADSQSRYTSQDQYNQGRHGQML) are disordered. Residues 1200-1226 (PNAQYADSQSRYTSQDQYNQGRHGQML) show a composition bias toward polar residues.

Belongs to the integrin alpha chain family. Heterodimer of an alpha and a beta subunit. Interacts with beta subunit pat-3. Interacts with dep-1. Component of an integrin containing attachment complex, composed of at least pat-2, pat-3, pat-4, pat-6, unc-52, unc-97 and unc-112. In terms of tissue distribution, expressed in body-wall muscle cells, distal tip cells, and vulval tissue.

It localises to the membrane. In terms of biological role, required for muscle development probably through the regulation of the actin-myosin cytoskeleton. Component of an integrin containing attachment complex, which is required for muscle maintenance. During the formation of neuromuscular junctions at the larval stage, negatively regulates membrane protrusion from body wall muscles, probably through lamins such as epi-1, lam-2 and unc-52. Required for distal tip cell migration and dorsal pathfinding. Required for egg-laying. May play a role in cell motility and cell-cell interactions. Plays a role in vulval development. Probably within the alpha pat-2/beta pat-3 integrin receptor complex, plays a role in the negative regulation of let-23 signaling and vulval induction. This is probably partly by restricting the mobility of the let-23 receptor on the plasma membrane of vulval cells which thereby attenuates let-23 signaling. The chain is Integrin alpha pat-2 from Caenorhabditis elegans.